We begin with the raw amino-acid sequence, 382 residues long: Galactokinase (382 aa).

Residue 34 to 37 participates in substrate binding; that stretch reads EHTD. Residue 124–130 coordinates ATP; that stretch reads GAGLSSS. Mg(2+) contacts are provided by Ser-130 and Glu-162. Asp-174 serves as the catalytic Proton acceptor. Residue Tyr-223 participates in substrate binding.

The protein belongs to the GHMP kinase family. GalK subfamily.

It localises to the cytoplasm. The catalysed reaction is alpha-D-galactose + ATP = alpha-D-galactose 1-phosphate + ADP + H(+). It functions in the pathway carbohydrate metabolism; galactose metabolism. Catalyzes the transfer of the gamma-phosphate of ATP to D-galactose to form alpha-D-galactose-1-phosphate (Gal-1-P). This is Galactokinase from Salmonella choleraesuis (strain SC-B67).